The sequence spans 274 residues: UPF0173 metal-dependent hydrolase Adeh_1068 (274 aa).

Belongs to the UPF0173 family.

This is UPF0173 metal-dependent hydrolase Adeh_1068 from Anaeromyxobacter dehalogenans (strain 2CP-C).